Consider the following 66-residue polypeptide: Alpha-conotoxin Vc1a (66 aa).

An N-terminal signal peptide occupies residues 1-25 (MGMRMMFTVFLLVVLATTVVSSTSG). A propeptide spanning residues 26-47 (RREFRGRNAAAKASDLVSLTDK) is cleaved from the precursor. Disulfide bonds link cysteine 51–cysteine 57 and cysteine 52–cysteine 65. Residues 53–55 (SDP) are ser-Xaa-Pro motif, crucial for potent interaction with nAChR. Key region for inhibition of alpha-9-alpha-10/CHRNA9-CHRNA10 nAChR regions lie at residues 54 to 56 (DPR) and 60 to 64 (DHPEI). Position 55 is a 4-hydroxyproline (proline 55). Glutamate 63 is subject to 4-carboxyglutamate. Cysteine 65 bears the Cysteine amide mark.

The protein belongs to the conotoxin A superfamily. Vc1.1 is described as having no post-translational modifications (except C-terminal amidation), whereas Vc1a contains a hydroxyproline at Pro-55 and a 4-carboxyglutamate at Glu-63 (and a C-terminal amidation). In terms of processing, hydroxylation of Pro-55 is not important for inhibition of alpha-9-alpha-10/CHRNA9-CHRNA10 nAChRs, since [P6O]Vc1.1 (Pro-55 hydroxylated) shows similar inhibition than native toxin (IC(50)=99.1 nM). In contrast, hydroxylation of Pro-55 seems to impair inhibition of HVA calcium channel currents, since [P6O]Vc1.1 has no effect on HVA calcium channel currents. In vivo, hydroxylation of Pro-55 seems to induce the loss of analgesic effects in rat models of neuropathic pain, since [P6O]Vc1.1 has no effect on mechanical allodynia. Post-translationally, gamma-carboxylation of Glu-63 is not important for inhibition of alpha-9-alpha-10/CHRNA9-CHRNA10 nAChRs, since [E14gamma]Vc1.1 (carboxyglutamate at Glu-63) shows similar inhibition than native toxin (IC(50)=65.3 nM). In contrast, gamma-carboxylation of Glu-63 seems to impair inhibition of HVA calcium channel currents, since [E14gamma]Vc1.1 has no effect on HVA calcium channel currents. Non-native isomers 'ribbon' (with disulfide connectivity C1-C4; C2-C3) and 'beads' (with disulfide connectivity C1-C2; C3-C4) of Vc1.1 also inhibit HVA calcium channel currents in rat DRG neurons (20-30% inhibition at 1 uM toxin). It has been shown that both reduced and alkylated Vc1.1 have no effect on HVA calcium channel currents. The observed activity can be attributed to specific isomers. In terms of processing, [C3S]Vc1.1(1-8) mutant is C-terminally amidated. In terms of tissue distribution, expressed by the venom duct.

Its subcellular location is the secreted. Alpha-conotoxins act on postsynaptic membranes, they bind to the nicotinic acetylcholine receptors (nAChR) and thus inhibit them. This toxin (native toxin Vc1a; hydroxylated and gamma-carboxylated) blocks alpha-9-alpha-10/CHRNA9-CHRNA10 nAChRs (IC(50)=62.9 nM). In contrast to the non-post-translationally modified analog Vc1.1, Vc1a does not inhibit high voltage-activated (HVA) calcium channel currents. In vivo, in contrast to Vc1.1, Vc1a does not show analgesic effects in rat models of neuropathic pain. In terms of biological role, the synthetic peptide Vc1.1 (a non-hydroxylated and non-gamma-carboxylated analog of Vc1a) has two types of targets. It blocks alpha-9-alpha-10/CHRNA9-CHRNA10 nAChRs (on rat receptors, IC(50)=19-109 nM) (with preference for rat over human receptors) and inhibits high voltage-activated (HVA) calcium channel (Cav2.2, Cav2.3) currents by acting on GABA(B) receptors (GABBR1 and GABBR2) (IC(50)=1.7 nM). It also shows moderate inhibition on alpha-6/alpha-3-beta-2-beta-3 (CHRNA6/CHRNA3-CHRNB2-CHRNB3) (IC(50)=140 nM) and alpha-6/alpha-3-beta-4 (CHRNA6/CHRNA3-CHRNB4) (IC(50)=980 nM). On alpha-9-alpha-10/CHRNA9-CHRNA10 nAChR, it most likely interacts with the alpha-10(+)/alpha-9(-)interface of the receptor. In vivo, it acts as a powerful analgesic in rat models of neuropathic pain. The chain is Alpha-conotoxin Vc1a from Conus victoriae (Queen Victoria cone).